The primary structure comprises 274 residues: Large ribosomal subunit protein uL2 (274 aa).

2 disordered regions span residues 37–59 (KAKN…GGHK) and 222–262 (GAAM…RTNK). Over residues 50-59 (TTRHKGGGHK) the composition is skewed to basic residues.

Belongs to the universal ribosomal protein uL2 family. In terms of assembly, part of the 50S ribosomal subunit. Forms a bridge to the 30S subunit in the 70S ribosome.

Its function is as follows. One of the primary rRNA binding proteins. Required for association of the 30S and 50S subunits to form the 70S ribosome, for tRNA binding and peptide bond formation. It has been suggested to have peptidyltransferase activity; this is somewhat controversial. Makes several contacts with the 16S rRNA in the 70S ribosome. This Alcanivorax borkumensis (strain ATCC 700651 / DSM 11573 / NCIMB 13689 / SK2) protein is Large ribosomal subunit protein uL2.